The primary structure comprises 1412 residues: DNA-directed RNA polymerase subunit beta' (1412 aa).

Zn(2+)-binding residues include C70, C72, C85, and C88. Mg(2+) contacts are provided by D460, D462, and D464. C819, C893, C900, and C903 together coordinate Zn(2+). A disordered region spans residues 1391–1412 (AEESFEFGTPETPAAEQQHSGE).

This sequence belongs to the RNA polymerase beta' chain family. As to quaternary structure, the RNAP catalytic core consists of 2 alpha, 1 beta, 1 beta' and 1 omega subunit. When a sigma factor is associated with the core the holoenzyme is formed, which can initiate transcription. Mg(2+) serves as cofactor. The cofactor is Zn(2+).

The catalysed reaction is RNA(n) + a ribonucleoside 5'-triphosphate = RNA(n+1) + diphosphate. Its function is as follows. DNA-dependent RNA polymerase catalyzes the transcription of DNA into RNA using the four ribonucleoside triphosphates as substrates. This Paraburkholderia xenovorans (strain LB400) protein is DNA-directed RNA polymerase subunit beta'.